Reading from the N-terminus, the 209-residue chain is Small ribosomal subunit protein uS3 (209 aa).

One can recognise a KH type-2 domain in the interval 38-107; the sequence is IRKFIKNRYY…RVVINIEEIK (70 aa).

The protein belongs to the universal ribosomal protein uS3 family. Part of the 30S ribosomal subunit. Forms a tight complex with proteins S10 and S14.

Functionally, binds the lower part of the 30S subunit head. Binds mRNA in the 70S ribosome, positioning it for translation. This is Small ribosomal subunit protein uS3 from Thermotoga petrophila (strain ATCC BAA-488 / DSM 13995 / JCM 10881 / RKU-1).